We begin with the raw amino-acid sequence, 353 residues long: Histidinol-phosphate aminotransferase (353 aa).

Residue Lys-214 is modified to N6-(pyridoxal phosphate)lysine.

The protein belongs to the class-II pyridoxal-phosphate-dependent aminotransferase family. Histidinol-phosphate aminotransferase subfamily. Homodimer. The cofactor is pyridoxal 5'-phosphate.

The catalysed reaction is L-histidinol phosphate + 2-oxoglutarate = 3-(imidazol-4-yl)-2-oxopropyl phosphate + L-glutamate. The protein operates within amino-acid biosynthesis; L-histidine biosynthesis; L-histidine from 5-phospho-alpha-D-ribose 1-diphosphate: step 7/9. This Gloeobacter violaceus (strain ATCC 29082 / PCC 7421) protein is Histidinol-phosphate aminotransferase.